Here is a 550-residue protein sequence, read N- to C-terminus: Hydroxylamine reductase (550 aa).

[2Fe-2S] cluster is bound by residues Cys-3, Cys-6, Cys-18, and Cys-25. Hybrid [4Fe-2O-2S] cluster contacts are provided by His-249, Glu-273, Cys-317, Cys-405, Cys-433, Cys-458, Glu-492, and Lys-494. Cysteine persulfide is present on Cys-405.

This sequence belongs to the HCP family. [2Fe-2S] cluster serves as cofactor. It depends on hybrid [4Fe-2O-2S] cluster as a cofactor.

The protein resides in the cytoplasm. It carries out the reaction A + NH4(+) + H2O = hydroxylamine + AH2 + H(+). Its activity is regulated as follows. Inhibited by oxygen. Activated by cyanide except in the prolonged presence of excess cyanide, where the enzyme is inactivated. Functionally, catalyzes the reduction of hydroxylamine to form NH(3) and H(2)O. Is also able to reduce hydroxylamine analogs such as methylhydroxylamine and hydroxyquinone. Might have a role as a scavenger of potentially toxic by-products of nitrate metabolism. The sequence is that of Hydroxylamine reductase from Escherichia coli (strain K12).